We begin with the raw amino-acid sequence, 296 residues long: GTPase Era (296 aa).

In terms of domain architecture, Era-type G spans 3 to 170 (KSGFVTIVGR…KELMFKYIPE (168 aa)). Residues 11–18 (GRPNVGKS) are G1. Residue 11-18 (GRPNVGKS) participates in GTP binding. Positions 37 to 41 (QTTRN) are G2. Residues 58–61 (DTPG) form a G3 region. GTP contacts are provided by residues 58-62 (DTPGI) and 120-123 (NKID). Residues 120–123 (NKID) are G4. The interval 149 to 151 (ISA) is G5. The 78-residue stretch at 201–278 (LSEEVPHGIA…YIRLWVKVKE (78 aa)) folds into the KH type-2 domain.

This sequence belongs to the TRAFAC class TrmE-Era-EngA-EngB-Septin-like GTPase superfamily. Era GTPase family. Monomer.

The protein localises to the cytoplasm. It is found in the cell membrane. Functionally, an essential GTPase that binds both GDP and GTP, with rapid nucleotide exchange. Plays a role in 16S rRNA processing and 30S ribosomal subunit biogenesis and possibly also in cell cycle regulation and energy metabolism. In Clostridium botulinum (strain Kyoto / Type A2), this protein is GTPase Era.